Reading from the N-terminus, the 495-residue chain is Aspartyl/glutamyl-tRNA(Asn/Gln) amidotransferase subunit B (495 aa).

This sequence belongs to the GatB/GatE family. GatB subfamily. Heterotrimer of A, B and C subunits.

It catalyses the reaction L-glutamyl-tRNA(Gln) + L-glutamine + ATP + H2O = L-glutaminyl-tRNA(Gln) + L-glutamate + ADP + phosphate + H(+). The enzyme catalyses L-aspartyl-tRNA(Asn) + L-glutamine + ATP + H2O = L-asparaginyl-tRNA(Asn) + L-glutamate + ADP + phosphate + 2 H(+). Functionally, allows the formation of correctly charged Asn-tRNA(Asn) or Gln-tRNA(Gln) through the transamidation of misacylated Asp-tRNA(Asn) or Glu-tRNA(Gln) in organisms which lack either or both of asparaginyl-tRNA or glutaminyl-tRNA synthetases. The reaction takes place in the presence of glutamine and ATP through an activated phospho-Asp-tRNA(Asn) or phospho-Glu-tRNA(Gln). The polypeptide is Aspartyl/glutamyl-tRNA(Asn/Gln) amidotransferase subunit B (Beijerinckia indica subsp. indica (strain ATCC 9039 / DSM 1715 / NCIMB 8712)).